The following is a 189-amino-acid chain: Glucose-6-phosphate isomerase (189 aa).

Residues H88, H90, E97, and H136 each coordinate Fe cation.

Belongs to the archaeal-type GPI family. Homodimer. Fe cation serves as cofactor.

It is found in the cytoplasm. The enzyme catalyses alpha-D-glucose 6-phosphate = beta-D-fructose 6-phosphate. The protein operates within carbohydrate degradation; glycolysis; D-glyceraldehyde 3-phosphate and glycerone phosphate from D-glucose: step 2/4. Inhibited by mannose 6-phosphate, fructose 1-phosphate and fructose 1,6-bisphosphate. This chain is Glucose-6-phosphate isomerase (pgiA), found in Pyrococcus furiosus (strain ATCC 43587 / DSM 3638 / JCM 8422 / Vc1).